The chain runs to 382 residues: Quinolinate synthase (382 aa).

Iminosuccinate-binding residues include H63 and S84. Residue C129 participates in [4Fe-4S] cluster binding. Residues 155-157 (YAN) and S172 each bind iminosuccinate. C216 contacts [4Fe-4S] cluster. Iminosuccinate is bound by residues 242–244 (HPE) and T259. C313 is a [4Fe-4S] cluster binding site.

The protein belongs to the quinolinate synthase family. Type 1 subfamily. The cofactor is [4Fe-4S] cluster.

The protein localises to the cytoplasm. It carries out the reaction iminosuccinate + dihydroxyacetone phosphate = quinolinate + phosphate + 2 H2O + H(+). The protein operates within cofactor biosynthesis; NAD(+) biosynthesis; quinolinate from iminoaspartate: step 1/1. Functionally, catalyzes the condensation of iminoaspartate with dihydroxyacetone phosphate to form quinolinate. The protein is Quinolinate synthase of Ralstonia pickettii (strain 12J).